Reading from the N-terminus, the 160-residue chain is SsrA-binding protein (160 aa).

Belongs to the SmpB family.

It localises to the cytoplasm. Required for rescue of stalled ribosomes mediated by trans-translation. Binds to transfer-messenger RNA (tmRNA), required for stable association of tmRNA with ribosomes. tmRNA and SmpB together mimic tRNA shape, replacing the anticodon stem-loop with SmpB. tmRNA is encoded by the ssrA gene; the 2 termini fold to resemble tRNA(Ala) and it encodes a 'tag peptide', a short internal open reading frame. During trans-translation Ala-aminoacylated tmRNA acts like a tRNA, entering the A-site of stalled ribosomes, displacing the stalled mRNA. The ribosome then switches to translate the ORF on the tmRNA; the nascent peptide is terminated with the 'tag peptide' encoded by the tmRNA and targeted for degradation. The ribosome is freed to recommence translation, which seems to be the essential function of trans-translation. This Zymomonas mobilis subsp. mobilis (strain ATCC 31821 / ZM4 / CP4) protein is SsrA-binding protein.